The chain runs to 242 residues: UPF0273 protein TM_0370 (242 aa).

In terms of domain architecture, KaiC spans 3 to 242 (KRVKTGIPGM…IYPSEGGEGR (240 aa)). An ATP-binding site is contributed by 30–37 (GGPGTGKT).

It belongs to the UPF0273 family.

In Thermotoga maritima (strain ATCC 43589 / DSM 3109 / JCM 10099 / NBRC 100826 / MSB8), this protein is UPF0273 protein TM_0370.